The sequence spans 137 residues: Small heat shock protein IbpA (137 aa).

Residues 28 to 137 (SQSNGGYPPY…ANKPRRIEIN (110 aa)) enclose the sHSP domain.

The protein belongs to the small heat shock protein (HSP20) family. As to quaternary structure, monomer. Forms homomultimers of about 100-150 subunits at optimal growth temperatures. Conformation changes to monomers at high temperatures or high ionic concentrations.

The protein localises to the cytoplasm. Its function is as follows. Associates with aggregated proteins, together with IbpB, to stabilize and protect them from irreversible denaturation and extensive proteolysis during heat shock and oxidative stress. Aggregated proteins bound to the IbpAB complex are more efficiently refolded and reactivated by the ATP-dependent chaperone systems ClpB and DnaK/DnaJ/GrpE. Its activity is ATP-independent. This is Small heat shock protein IbpA from Citrobacter koseri (strain ATCC BAA-895 / CDC 4225-83 / SGSC4696).